We begin with the raw amino-acid sequence, 413 residues long: Chloramphenicol efflux pump Rv0191 (413 aa).

12 consecutive transmembrane segments (helical) span residues 23 to 43 (LSVL…PVGA), 55 to 75 (VVLV…TTVP), 89 to 109 (LVVS…APNF), 110 to 130 (AVLA…WAVI), 150 to 170 (IYIG…AMSL), 176 to 196 (LAAV…RLAL), 226 to 246 (VLTM…VVII), 256 to 276 (NLAW…PLVA), 286 to 306 (AVIV…ALAF), 312 to 332 (AATA…ATAV), 353 to 373 (GLYV…GGLL), and 378 to 398 (LAMM…GMTV).

The protein belongs to the major facilitator superfamily.

It localises to the cell membrane. Its activity is regulated as follows. Inhibited by the drug efflux pump inhibitors verapamil, resperine, piperine, chlorpromazine and carbonyl cyanide m-chlorophenylhydrazone (CCCP). Functionally, active efflux pump that plays an important role in chloramphenicol resistance. Overexpression causes pyrazinamide resistance. In Mycobacterium tuberculosis (strain ATCC 25618 / H37Rv), this protein is Chloramphenicol efflux pump Rv0191.